Reading from the N-terminus, the 171-residue chain is Protein GrpE (171 aa).

A disordered region spans residues 1–22 (MNHEHPDIESQQSAADAAAAAG).

This sequence belongs to the GrpE family. In terms of assembly, homodimer.

The protein resides in the cytoplasm. Its function is as follows. Participates actively in the response to hyperosmotic and heat shock by preventing the aggregation of stress-denatured proteins, in association with DnaK and GrpE. It is the nucleotide exchange factor for DnaK and may function as a thermosensor. Unfolded proteins bind initially to DnaJ; upon interaction with the DnaJ-bound protein, DnaK hydrolyzes its bound ATP, resulting in the formation of a stable complex. GrpE releases ADP from DnaK; ATP binding to DnaK triggers the release of the substrate protein, thus completing the reaction cycle. Several rounds of ATP-dependent interactions between DnaJ, DnaK and GrpE are required for fully efficient folding. The protein is Protein GrpE of Stenotrophomonas maltophilia (strain R551-3).